A 489-amino-acid polypeptide reads, in one-letter code: Glycogen synthase (489 aa).

Position 18 (K18) interacts with ADP-alpha-D-glucose.

It belongs to the glycosyltransferase 1 family. Bacterial/plant glycogen synthase subfamily.

The catalysed reaction is [(1-&gt;4)-alpha-D-glucosyl](n) + ADP-alpha-D-glucose = [(1-&gt;4)-alpha-D-glucosyl](n+1) + ADP + H(+). Its pathway is glycan biosynthesis; glycogen biosynthesis. Functionally, synthesizes alpha-1,4-glucan chains using ADP-glucose. The chain is Glycogen synthase from Rhodopseudomonas palustris (strain BisB18).